Here is a 609-residue protein sequence, read N- to C-terminus: MKVINLFASSIITTLSMLTLPIVLTSTSIYKNKLYPQYVKTTISYAFMISMIPTTMFIYSGQEMIISNWHWMTIQTMKLTLSFKLDHFSMIFVPVALFVTWSIMEFSMWYMHSDPFINRFFKYLLMFLITMMILVTANNLFQLFIGWEGVGIMSFLLIGWWHGRTDANTAALQAVLYNRIGDVGFIMAMAWFLINLNTWELQQIFISHHNNLNMPLMGLLLAATGKSAQFGLHPWLPSAMEGPTPVSALLHSSTMVVAGVFLLIRFHPLMEHNTMMQTTTLCLGAITTLFTAICALTQNDIKKIIAFSTSSQLGLMIVTIGINQPHLAFLHICTHAFFKAMLFMCSGSIIHNLNDEQDIRKMGGLYKVLPFTTTSLIVGSLALTGMPFLTGFYSKDLIIETANTSYTNAWALLLTLVATSMTAAYSTRIMFFTLLGQPRFNPMITINENSPLLINSIKRLLLGSIFAGYLISYNITPTSTPQMTMPYYLKLTALTVTLLGFILALELNLTSQSLKLKYPSNLFKFSSLLGYFPTIIHRYMPMVNLSASQKLASTLLDAIWLESALPKSISYFHMKSSVTISNQKGLIKLYFLSFIITLILALMMINSHE.

16 helical membrane passes run Val3 to Val23, Ala46 to Ile66, Met90 to Tyr110, Pro115 to Val135, Leu140 to Trp160, Ala174 to Ile194, Leu216 to Leu236, Thr244 to Ile264, Met276 to Leu296, Ile304 to Asn323, Ala328 to Ile350, Val368 to Phe388, Trp410 to Phe432, Leu460 to Thr480, Met485 to Leu505, and Gly585 to Ile605.

Belongs to the complex I subunit 5 family.

The protein localises to the mitochondrion inner membrane. It catalyses the reaction a ubiquinone + NADH + 5 H(+)(in) = a ubiquinol + NAD(+) + 4 H(+)(out). Its function is as follows. Core subunit of the mitochondrial membrane respiratory chain NADH dehydrogenase (Complex I) that is believed to belong to the minimal assembly required for catalysis. Complex I functions in the transfer of electrons from NADH to the respiratory chain. The immediate electron acceptor for the enzyme is believed to be ubiquinone. This chain is NADH-ubiquinone oxidoreductase chain 5 (MT-ND5), found in Phoca vitulina (Harbor seal).